A 367-amino-acid chain; its full sequence is Cobalt-precorrin-5B C(1)-methyltransferase (367 aa).

It belongs to the CbiD family.

It catalyses the reaction Co-precorrin-5B + S-adenosyl-L-methionine = Co-precorrin-6A + S-adenosyl-L-homocysteine. The protein operates within cofactor biosynthesis; adenosylcobalamin biosynthesis; cob(II)yrinate a,c-diamide from sirohydrochlorin (anaerobic route): step 6/10. Catalyzes the methylation of C-1 in cobalt-precorrin-5B to form cobalt-precorrin-6A. The sequence is that of Cobalt-precorrin-5B C(1)-methyltransferase from Leptospira interrogans serogroup Icterohaemorrhagiae serovar Lai (strain 56601).